An 88-amino-acid polypeptide reads, in one-letter code: Small ribosomal subunit protein uS15 (88 aa).

Belongs to the universal ribosomal protein uS15 family. In terms of assembly, part of the 30S ribosomal subunit. Forms a bridge to the 50S subunit in the 70S ribosome, contacting the 23S rRNA.

In terms of biological role, one of the primary rRNA binding proteins, it binds directly to 16S rRNA where it helps nucleate assembly of the platform of the 30S subunit by binding and bridging several RNA helices of the 16S rRNA. Its function is as follows. Forms an intersubunit bridge (bridge B4) with the 23S rRNA of the 50S subunit in the ribosome. In Geobacter sulfurreducens (strain ATCC 51573 / DSM 12127 / PCA), this protein is Small ribosomal subunit protein uS15.